The primary structure comprises 207 residues: Segregation and condensation protein B (207 aa).

This sequence belongs to the ScpB family. Homodimer. Homodimerization may be required to stabilize the binding of ScpA to the Smc head domains. Component of a cohesin-like complex composed of ScpA, ScpB and the Smc homodimer, in which ScpA and ScpB bind to the head domain of Smc. The presence of the three proteins is required for the association of the complex with DNA.

The protein localises to the cytoplasm. Its function is as follows. Participates in chromosomal partition during cell division. May act via the formation of a condensin-like complex containing Smc and ScpA that pull DNA away from mid-cell into both cell halves. This Mycoplasmopsis pulmonis (strain UAB CTIP) (Mycoplasma pulmonis) protein is Segregation and condensation protein B.